Here is a 256-residue protein sequence, read N- to C-terminus: Galactitol 2-dehydrogenase (256 aa).

NAD(+) is bound by residues 15–17, Asp-36, 59–60, Asn-86, Tyr-152, and Lys-156; these read RGI and DV. Catalysis depends on Tyr-152, which acts as the Proton acceptor.

This sequence belongs to the short-chain dehydrogenases/reductases (SDR) family.

It carries out the reaction galactitol + NAD(+) = keto-D-tagatose + NADH + H(+). The enzyme catalyses keto-D-fructose + NADH + H(+) = D-sorbitol + NAD(+). It functions in the pathway carbohydrate metabolism. Involved in galactitol catabolism. Catalyzes the oxidation of galactitol to D-tagatose. Can also catalyze the oxidation of D-sorbitol to D-fructose. This Agrobacterium fabrum (strain C58 / ATCC 33970) (Agrobacterium tumefaciens (strain C58)) protein is Galactitol 2-dehydrogenase.